A 469-amino-acid chain; its full sequence is MAKTLYEKLFDSHIVYEAEGETPILYINRHLIHEVTSPQAFDGLRVANRQVRQVNKTFGTMDHSISTQVRDVNKLEGQAKIQVLELDKNTKATGIKLFDITTKEQGIVHVMGPEQGLTLPGMTIVCGDSHTATHGAFGALAFGIGTSEVEHVLATQTLKQARAKSMKIEVRGKVASGITAKDIILAIIGKTTMAGGTGHVVEFCGEAIRDLSMEGRMTVCNMAIEMGAKAGLIAPDETTFAYLKDRPHAPKGKDWDDAVAYWKTLKSDDDAQFDTVVTLEAKDIAPQVTWGTNPGQVISVNETIPNPQEMADPVQRASAEKALHYIGLEAGTNLKDIKVDQVFIGSCTNSRIEDLRAAAAVMKGRKKADNVKRILVVPGSGLVKEQAEKEGLDKIFIAAGAEWRNPGCSMCLGMNDDRLGEWERCASTSNRNFEGRQGRNGRTHLVSPAMAAAAGMFGKFVDIREVALN.

Residues cysteine 347, cysteine 408, and cysteine 411 each coordinate [4Fe-4S] cluster.

Belongs to the aconitase/IPM isomerase family. LeuC type 1 subfamily. Heterodimer of LeuC and LeuD. Requires [4Fe-4S] cluster as cofactor.

The enzyme catalyses (2R,3S)-3-isopropylmalate = (2S)-2-isopropylmalate. The protein operates within amino-acid biosynthesis; L-leucine biosynthesis; L-leucine from 3-methyl-2-oxobutanoate: step 2/4. In terms of biological role, catalyzes the isomerization between 2-isopropylmalate and 3-isopropylmalate, via the formation of 2-isopropylmaleate. The chain is 3-isopropylmalate dehydratase large subunit from Haemophilus influenzae (strain 86-028NP).